We begin with the raw amino-acid sequence, 126 residues long: Major sperm protein 2 (126 aa).

Residue Ala2 is modified to N-acetylalanine. The 118-residue stretch at 8–125 (DIATMPNQKV…RRKNLPIEYN (118 aa)) folds into the MSP domain.

As to expression, sperm.

Its subcellular location is the cell projection. It localises to the pseudopodium. The protein localises to the cytoplasm. It is found in the cytoskeleton. Central component in molecular interactions underlying sperm crawling. Forms an extensive filament system that extends from sperm villipoda, along the leading edge of the pseudopod. This chain is Major sperm protein 2 (MSP-2), found in Globodera rostochiensis (Golden nematode worm).